The following is an 82-amino-acid chain: Small ribosomal subunit protein bS16 (82 aa).

The protein belongs to the bacterial ribosomal protein bS16 family.

The protein is Small ribosomal subunit protein bS16 of Deinococcus geothermalis (strain DSM 11300 / CIP 105573 / AG-3a).